A 601-amino-acid polypeptide reads, in one-letter code: ATP-dependent lipid A-core flippase (601 aa).

One can recognise an ABC transmembrane type-1 domain in the interval 28 to 328; it reads LLSVCGLIVY…LTRVNAEFQR (301 aa). Helical transmembrane passes span 32–52, 81–101, 160–180, 183–203, 267–287, and 296–316; these read CGLI…GPFI, VLLM…FANF, ALIS…LMFY, WKLS…ITIV, AVSQ…VLYA, and DLTA…LQPI. The ABC transporter domain maps to 360–597; it reads LRFDNVSFSY…GGMYAKLYQM (238 aa). 394–401 contributes to the ATP binding site; sequence GRSGSGKS.

The protein belongs to the ABC transporter superfamily. Lipid exporter (TC 3.A.1.106) family. As to quaternary structure, homodimer.

It is found in the cell inner membrane. The catalysed reaction is ATP + H2O + lipid A-core oligosaccharideSide 1 = ADP + phosphate + lipid A-core oligosaccharideSide 2.. Functionally, involved in lipopolysaccharide (LPS) biosynthesis. Translocates lipid A-core from the inner to the outer leaflet of the inner membrane. Transmembrane domains (TMD) form a pore in the inner membrane and the ATP-binding domain (NBD) is responsible for energy generation. In Shewanella sp. (strain MR-4), this protein is ATP-dependent lipid A-core flippase.